The following is a 317-amino-acid chain: Transaldolase (317 aa).

Lysine 126 serves as the catalytic Schiff-base intermediate with substrate.

It belongs to the transaldolase family. Type 1 subfamily. In terms of assembly, homodimer.

It is found in the cytoplasm. The enzyme catalyses D-sedoheptulose 7-phosphate + D-glyceraldehyde 3-phosphate = D-erythrose 4-phosphate + beta-D-fructose 6-phosphate. It functions in the pathway carbohydrate degradation; pentose phosphate pathway; D-glyceraldehyde 3-phosphate and beta-D-fructose 6-phosphate from D-ribose 5-phosphate and D-xylulose 5-phosphate (non-oxidative stage): step 2/3. Its function is as follows. Transaldolase is important for the balance of metabolites in the pentose-phosphate pathway. The sequence is that of Transaldolase from Paraburkholderia xenovorans (strain LB400).